The following is a 505-amino-acid chain: Glutamate--tRNA ligase (505 aa).

Residues 12-22 (PSPTGALHIGG) carry the 'HIGH' region motif. The 'KMSKS' region motif lies at 260-264 (KLSKR). Position 263 (K263) interacts with ATP.

It belongs to the class-I aminoacyl-tRNA synthetase family. Glutamate--tRNA ligase type 1 subfamily. As to quaternary structure, monomer.

It is found in the cytoplasm. The enzyme catalyses tRNA(Glu) + L-glutamate + ATP = L-glutamyl-tRNA(Glu) + AMP + diphosphate. In terms of biological role, catalyzes the attachment of glutamate to tRNA(Glu) in a two-step reaction: glutamate is first activated by ATP to form Glu-AMP and then transferred to the acceptor end of tRNA(Glu). This is Glutamate--tRNA ligase from Phocaeicola vulgatus (strain ATCC 8482 / DSM 1447 / JCM 5826 / CCUG 4940 / NBRC 14291 / NCTC 11154) (Bacteroides vulgatus).